A 332-amino-acid polypeptide reads, in one-letter code: MRIAFFSAQPYEKEPFEKVNENYKHEIDYHESILNKKTAVLAEKAPVVCVFVNDKVDADTLKVLAKNGTKLIALRCAGFNNVDLKAAADNGITVVRVPAYSPYAVAEYTIGLLLSLNRKIHRAYVRVREDDFNLNGLLGHDLHGKTIGLLGTGRIGGLVAKCLKLGFGCEVLAHDIKPNKELEKFGIQFVEQQEVLAKADFLCLHCPLTPDTEHLVDEKLLASMKKGVKIINTSRGGLVDTKALVKAIESGQVGGCAMDVYEGERRLFYRDLSNEVIKDTTFQQLANFPNVLVTSHQAFFTAEALSAIAHTTLKNVSDFASQNNDPSVIVKN.

NAD(+) is bound by residues 154 to 155 (RI), 233 to 235 (TSR), and Asp-259. Residue Arg-235 is part of the active site. Glu-264 is a catalytic residue. His-296 acts as the Proton donor in catalysis. Residue 296–299 (HQAF) participates in NAD(+) binding.

The protein belongs to the D-isomer specific 2-hydroxyacid dehydrogenase family.

It localises to the cytoplasm. Its subcellular location is the nucleus. The sequence is that of 2-hydroxyacid dehydrogenase homolog 1 from Schizosaccharomyces pombe (strain 972 / ATCC 24843) (Fission yeast).